Reading from the N-terminus, the 162-residue chain is Beta-lactoglobulin-1 (162 aa).

2 cysteine pairs are disulfide-bonded: Cys-66/Cys-160 and Cys-106/Cys-119.

It belongs to the calycin superfamily. Lipocalin family. Monomer.

Its subcellular location is the secreted. Lactoglobulin is the primary component of whey, it binds retinol and is probably involved in the transport of that molecule. This Felis catus (Cat) protein is Beta-lactoglobulin-1 (LGB1).